A 230-amino-acid chain; its full sequence is Ribosome-recycling factor, mitochondrial (230 aa).

A mitochondrion-targeting transit peptide spans 1-24 (MILTTARLNCRPVTVPRLFNRSFS).

It belongs to the RRF family.

It localises to the mitochondrion. Its function is as follows. Necessary for protein synthesis in mitochondria. Functions as a ribosome recycling factor in mitochondria. This chain is Ribosome-recycling factor, mitochondrial (RRF1), found in Saccharomyces cerevisiae (strain ATCC 204508 / S288c) (Baker's yeast).